A 453-amino-acid polypeptide reads, in one-letter code: Putative dipeptidase UREG_03382 (453 aa).

The segment at 1–33 (MSTRDHVKQSPMPVQEGYPRSSKEFSPPSSRSR) is disordered. A helical membrane pass occupies residues 41–63 (LTMSLLIAAGAATFSKYIFPLGS). Residues histidine 95, aspartate 97, and glutamate 208 each coordinate Zn(2+). Cysteine 147 and cysteine 223 are oxidised to a cystine. Residue histidine 221 participates in substrate binding. 2 residues coordinate Zn(2+): histidine 265 and histidine 286. The substrate site is built by arginine 297 and aspartate 357. 2 N-linked (GlcNAc...) asparagine glycosylation sites follow: asparagine 370 and asparagine 443.

Belongs to the metallo-dependent hydrolases superfamily. Peptidase M19 family. Zn(2+) is required as a cofactor.

The protein resides in the membrane. It carries out the reaction an L-aminoacyl-L-amino acid + H2O = 2 an L-alpha-amino acid. Hydrolyzes a wide range of dipeptides. This is Putative dipeptidase UREG_03382 from Uncinocarpus reesii (strain UAMH 1704).